The chain runs to 177 residues: Putative fimbrin-like protein FimI (177 aa).

Positions 1–19 (MIRKGAALVGLVLMSPVIA) are cleaved as a signal peptide. The cysteines at positions 40 and 81 are disulfide-linked.

This sequence belongs to the fimbrial protein family.

It localises to the fimbrium. The protein is Putative fimbrin-like protein FimI (fimI) of Salmonella typhi.